We begin with the raw amino-acid sequence, 302 residues long: (2S)-3-sulfopropanediol sulfolyase activating enzyme (302 aa).

One can recognise a Radical SAM core domain in the interval 19–301; that stretch reads HDGEGIRTLV…RLNIMLKSYE (283 aa). Residues Cys33, Cys37, Cys40, Cys59, Cys65, Cys68, Cys72, Cys91, Cys94, Cys97, and Cys101 each coordinate [4Fe-4S] cluster. Residue 39 to 41 coordinates S-adenosyl-L-methionine; that stretch reads WCS. 2 consecutive 4Fe-4S ferredoxin-type domains span residues 50–81 and 82–111; these read PERA…SIVG and GLVC…VYGE. S-adenosyl-L-methionine is bound by residues Gly141 and 190-192; that span reads DIK.

It belongs to the organic radical-activating enzymes family. [4Fe-4S] cluster is required as a cofactor.

It catalyses the reaction glycyl-[protein] + reduced [flavodoxin] + S-adenosyl-L-methionine = glycin-2-yl radical-[protein] + semiquinone [flavodoxin] + 5'-deoxyadenosine + L-methionine + H(+). The protein operates within organosulfur degradation; alkanesulfonate degradation. Involved in the degradation of the organosulfur compound 2(S)-dihydroxypropanesulfonate (DHPS). Catalyzes activation of the (2S)-3-sulfopropanediol sulfolyase HpsG under anaerobic conditions by generation of an organic free radical on a glycine residue. The sequence is that of (2S)-3-sulfopropanediol sulfolyase activating enzyme from Bilophila wadsworthia (strain 3_1_6).